We begin with the raw amino-acid sequence, 264 residues long: Diphthine synthase (264 aa).

S-adenosyl-L-methionine is bound by residues Leu-9, Asp-84, Val-87, 112 to 113 (SI), Leu-164, Ala-207, and His-232.

The protein belongs to the diphthine synthase family. Homodimer.

The catalysed reaction is 2-[(3S)-amino-3-carboxypropyl]-L-histidyl-[translation elongation factor 2] + 3 S-adenosyl-L-methionine = diphthine-[translation elongation factor 2] + 3 S-adenosyl-L-homocysteine + 3 H(+). Its pathway is protein modification; peptidyl-diphthamide biosynthesis. In terms of biological role, S-adenosyl-L-methionine-dependent methyltransferase that catalyzes the trimethylation of the amino group of the modified target histidine residue in translation elongation factor 2 (EF-2), to form an intermediate called diphthine. The three successive methylation reactions represent the second step of diphthamide biosynthesis. This is Diphthine synthase from Methanothermobacter thermautotrophicus (strain ATCC 29096 / DSM 1053 / JCM 10044 / NBRC 100330 / Delta H) (Methanobacterium thermoautotrophicum).